We begin with the raw amino-acid sequence, 503 residues long: Na(+)-translocating NADH-quinone reductase subunit B (503 aa).

5 helical membrane passes run 55-75 (MMLVVIALMPTVFVAIWNSGL), 85-105 (PQIMEAFLHISGFTSYFSFVS), 120-142 (IFLPLLFISYAVGGTCEVLFAII), 161-181 (ILPPTIPYWMAALGIAFGVVI), and 186-206 (FGGTGMNILNPALTGRAFLFF). Threonine 248 is subject to FMN phosphoryl threonine. The next 5 helical transmembrane spans lie at 361–381 (TSTVACLLGAGLLLLTGIASW), 387–407 (FGLSSLFFAWLFKIISILAAG), 417–437 (FFIPVYRHLFIGGLAFGLVFM), 452–472 (WFYGAFIGFLTILIRLINPAY), and 475–495 (GVMLAILLGNVFAPSFDRIAL).

Belongs to the NqrB/RnfD family. In terms of assembly, composed of six subunits; NqrA, NqrB, NqrC, NqrD, NqrE and NqrF. FMN is required as a cofactor.

The protein localises to the cell inner membrane. It catalyses the reaction a ubiquinone + n Na(+)(in) + NADH + H(+) = a ubiquinol + n Na(+)(out) + NAD(+). Its function is as follows. NQR complex catalyzes the reduction of ubiquinone-1 to ubiquinol by two successive reactions, coupled with the transport of Na(+) ions from the cytoplasm to the periplasm. NqrA to NqrE are probably involved in the second step, the conversion of ubisemiquinone to ubiquinol. This is Na(+)-translocating NADH-quinone reductase subunit B from Chlamydia muridarum (strain MoPn / Nigg).